Reading from the N-terminus, the 595-residue chain is Beta-hexosaminidase 1 (595 aa).

Residues 1 to 20 (MRFAYLATLAGSLLAGLAQA) form the signal peptide. N313 carries an N-linked (GlcNAc...) asparagine glycan.

This sequence belongs to the glycosyl hydrolase 20 family.

The catalysed reaction is Hydrolysis of terminal non-reducing N-acetyl-D-hexosamine residues in N-acetyl-beta-D-hexosaminides.. Its function is as follows. Beta-hexosaminidase that shows a broad substrate specificity. The sequence is that of Beta-hexosaminidase 1 from Coccidioides posadasii (strain RMSCC 757 / Silveira) (Valley fever fungus).